The primary structure comprises 314 residues: Zinc transporter ZIP3 (314 aa).

The Extracellular segment spans residues 1–3 (MNL). A helical transmembrane segment spans residues 4 to 24 (IFAKVLCLLAILVLMMLGSLI). At 25–41 (PVKISEADFDKSSRSRK) the chain is on the cytoplasmic side. Residues 42 to 62 (ILSLSNSFAGGVFLATCFNAL) form a helical membrane-spanning segment. At 63–84 (LPAVREKFFDLLKIGNISTDYP) the chain is on the extracellular side. The chain crosses the membrane as a helical span at residues 85–105 (LAETIMMVGFFLTVFVEQTVM). Topologically, residues 106-169 (TFRKEKPSFI…KELSSSSPIR (64 aa)) are cytoplasmic. The chain crosses the membrane as a helical span at residues 170-190 (LFSLVFALSAHSVFEGLALGL). Residues 191 to 196 (QEDGNK) lie on the Extracellular side of the membrane. A helical membrane pass occupies residues 197 to 217 (LLSLFIGVVIHETLVAMALGV). At 218 to 229 (SMAKVNTHLKDA) the chain is on the cytoplasmic side. The chain crosses the membrane as a helical span at residues 230–250 (IKMAVLVSTMIPIGIVVGMAI). Residues 251–262 (QSAQNMASSIAS) lie on the Extracellular side of the membrane. The chain crosses the membrane as a helical span at residues 263–283 (ALLQGIAGGTFIFVTFFEILV). At 284–292 (KELEEKNDR) the chain is on the cytoplasmic side. The helical transmembrane segment at 293–313 (LLKVLFLVLGYTVLAVLVLFK) threads the bilayer. Tryptophan 314 is a topological domain (extracellular).

It belongs to the ZIP transporter (TC 2.A.5) family.

Its subcellular location is the cell membrane. The protein resides in the apical cell membrane. The enzyme catalyses Zn(2+)(in) = Zn(2+)(out). In terms of biological role, transporter for the divalent cation Zn(2+). Mediates the influx of Zn(2+) into cells from extracellular space. The chain is Zinc transporter ZIP3 (slc39a3) from Xenopus tropicalis (Western clawed frog).